The following is a 102-amino-acid chain: Small ribosomal subunit protein uS10 (102 aa).

It belongs to the universal ribosomal protein uS10 family. In terms of assembly, part of the 30S ribosomal subunit.

Its function is as follows. Involved in the binding of tRNA to the ribosomes. This Thermobifida fusca (strain YX) protein is Small ribosomal subunit protein uS10.